The chain runs to 176 residues: Mediator of RNA polymerase II transcription subunit 11 (176 aa).

The disordered stretch occupies residues 98 to 176 (SRVRELEETK…MGGDSSMSTN (79 aa)). Basic and acidic residues predominate over residues 99 to 108 (RVRELEETKA). The span at 124–154 (HAAAQQQQQQQQQQQQQQQQMQQAAQQQQQQ) shows a compositional bias: low complexity.

The protein belongs to the Mediator complex subunit 11 family. Component of the Mediator complex, which may include CDK8, MED4, MED6, MED11, MED14, MED17, MED18, MED20, MED21, MED22, MED27, MED28, MED30 and MED31.

Its subcellular location is the nucleus. Functionally, component of the Mediator complex, a coactivator involved in the regulated transcription of nearly all RNA polymerase II-dependent genes. Mediator functions as a bridge to convey information from gene-specific regulatory proteins to the basal RNA polymerase II transcription machinery. Mediator is recruited to promoters by direct interactions with regulatory proteins and serves as a scaffold for the assembly of a functional pre-initiation complex with RNA polymerase II and the general transcription factors. The chain is Mediator of RNA polymerase II transcription subunit 11 (MED11) from Drosophila melanogaster (Fruit fly).